The following is a 740-amino-acid chain: Ribosome-releasing factor 2, mitochondrial (740 aa).

Residues Met1 to Tyr29 constitute a mitochondrion transit peptide. The region spanning Ser31–Glu310 is the tr-type G domain. Residues Ala40–Thr47, Asp104–His108, and Asn158–Asp161 each bind GTP.

This sequence belongs to the TRAFAC class translation factor GTPase superfamily. Classic translation factor GTPase family. EF-G/EF-2 subfamily.

It localises to the mitochondrion. Its function is as follows. Mitochondrial GTPase that mediates the disassembly of ribosomes from messenger RNA at the termination of mitochondrial protein biosynthesis. Not involved in the GTP-dependent ribosomal translocation step during translation elongation. The protein is Ribosome-releasing factor 2, mitochondrial of Drosophila melanogaster (Fruit fly).